A 492-amino-acid chain; its full sequence is MEPSSKKLTGRLMLAVGGAVLGSLQFGYNTGVINAPQKVIEEFYNQTWLHRYGESISPATLTTLWSLSVAIFSVGGMIGSFSVGLFVNRFGRRNSMLMMNLLAFISAVLMGFSKLGKSFEMLILGRFIIGVYCGLTTGFVPMYVGEVSPTALRGALGTLHQLGIVVGILIAQVFGLDSIMGNEELWPLLLSVIFIPALLQCVLLPFCPESPRFLLINRNEENRAKSVLKKLRGTADVTRDLQEMKEESRQMMREKKVTILELFRSAAYRQPILIAVVLQLSQQLSGINAVFYYSTSIFEKAGVQQPVYATIGSGIVNTAFTVVSLFVVERAGRRTLHLIGLAGMAGCAVLMTIALALLEQLPWMSYLSIVAIFGFVAFFEVGPGPIPWFIVAELFSQGPRPAAIAVAGFSNWTSNFIVGMCFQYVEQLCGPYVFIIFTVLLVLFFIFTYFKVPETKGRTFDEIASGFRQGGASQSDKTPEELFHPLGADSQV.

Met-1 carries the N-acetylmethionine modification. The Cytoplasmic portion of the chain corresponds to 1-11; sequence MEPSSKKLTGR. A helical membrane pass occupies residues 12–33; that stretch reads LMLAVGGAVLGSLQFGYNTGVI. Over 34 to 66 the chain is Extracellular; that stretch reads NAPQKVIEEFYNQTWLHRYGESISPATLTTLWS. Residue Asn-45 is glycosylated (N-linked (GlcNAc...) asparagine). Residues 67 to 87 form a helical membrane-spanning segment; the sequence is LSVAIFSVGGMIGSFSVGLFV. Residues 88-90 lie on the Cytoplasmic side of the membrane; the sequence is NRF. The helical transmembrane segment at 91-112 threads the bilayer; the sequence is GRRNSMLMMNLLAFISAVLMGF. At 113 to 120 the chain is on the extracellular side; it reads SKLGKSFE. A helical transmembrane segment spans residues 121 to 144; it reads MLILGRFIIGVYCGLTTGFVPMYV. Residues 145 to 155 are Cytoplasmic-facing; sequence GEVSPTALRGA. Residues 156–176 form a helical membrane-spanning segment; sequence LGTLHQLGIVVGILIAQVFGL. Residue Gln-161 participates in D-glucose binding. The Extracellular portion of the chain corresponds to 177 to 185; that stretch reads DSIMGNEEL. The helical transmembrane segment at 186 to 206 threads the bilayer; it reads WPLLLSVIFIPALLQCVLLPF. Over 207–271 the chain is Cytoplasmic; it reads CPESPRFLLI…LFRSAAYRQP (65 aa). At Ser-226 the chain carries Phosphoserine. The chain crosses the membrane as a helical span at residues 272 to 293; it reads ILIAVVLQLSQQLSGINAVFYY. Residues 282–283 and Asn-288 each bind D-glucose; that span reads QQ. Residues 294–306 lie on the Extracellular side of the membrane; the sequence is STSIFEKAGVQQP. The helical transmembrane segment at 307–328 threads the bilayer; it reads VYATIGSGIVNTAFTVVSLFVV. Asn-317 contributes to the D-glucose binding site. Over 329 to 334 the chain is Cytoplasmic; it reads ERAGRR. A helical transmembrane segment spans residues 335 to 355; it reads TLHLIGLAGMAGCAVLMTIAL. The Extracellular portion of the chain corresponds to 356 to 365; that stretch reads ALLEQLPWMS. A helical membrane pass occupies residues 366–388; sequence YLSIVAIFGFVAFFEVGPGPIPW. Residues Glu-380 and Trp-388 each coordinate D-glucose. Over 389 to 401 the chain is Cytoplasmic; sequence FIVAELFSQGPRP. A helical transmembrane segment spans residues 402-422; sequence AAIAVAGFSNWTSNFIVGMCF. Over 423-429 the chain is Extracellular; it reads QYVEQLC. The helical transmembrane segment at 430 to 450 threads the bilayer; it reads GPYVFIIFTVLLVLFFIFTYF. Ser-465 carries the phosphoserine modification. Positions 468-492 are disordered; the sequence is RQGGASQSDKTPEELFHPLGADSQV. Residue Thr-478 is modified to Phosphothreonine. The residue at position 490 (Ser-490) is a Phosphoserine.

The protein belongs to the major facilitator superfamily. Sugar transporter (TC 2.A.1.1) family. Glucose transporter subfamily. In terms of assembly, found in a complex with ADD2, DMTN and SLC2A1. Interacts (via C-terminus cytoplasmic region) with DMTN. Interacts with SNX27; the interaction is required when endocytosed to prevent degradation in lysosomes and promote recycling to the plasma membrane. Interacts with GIPC (via PDZ domain). Interacts with STOM. Interacts with SGTA (via Gln-rich region). Interacts with BSG. Interacts with SMIM43; the interaction may promote SLC2A1-mediated glucose transport to meet the energy needs of mesendoderm differentiation. Post-translationally, phosphorylation at Ser-226 by PKC promotes glucose uptake by increasing cell membrane localization.

It localises to the cell membrane. The protein localises to the photoreceptor inner segment. The catalysed reaction is D-glucose(out) = D-glucose(in). Its activity is regulated as follows. The uptake of glucose is inhibited by cytochalasin B. Glucose uptake is increased in response to phorbol ester 12-O-tetradecanoylphorbol-13-acetate (TPA) treatment: TPA-induced glucose uptake requires phosphorylation at Ser-226. Facilitative glucose transporter, which is responsible for constitutive or basal glucose uptake. Has a very broad substrate specificity; can transport a wide range of aldoses including both pentoses and hexoses. Most important energy carrier of the brain: present at the blood-brain barrier and assures the energy-independent, facilitative transport of glucose into the brain. In association with BSG and NXNL1, promotes retinal cone survival by increasing glucose uptake into photoreceptors. Required for mesendoderm differentiation. This Sus scrofa (Pig) protein is Solute carrier family 2, facilitated glucose transporter member 1.